The following is a 529-amino-acid chain: CTP synthase (529 aa).

The tract at residues 1-266 (MTKYIIVTGG…TKKIFNKLGL (266 aa)) is amidoligase domain. Ser-13 serves as a coordination point for CTP. Position 13 (Ser-13) interacts with UTP. 14-19 (SVGKGT) lines the ATP pocket. Tyr-54 serves as a coordination point for L-glutamine. Asp-71 contributes to the ATP binding site. Mg(2+) contacts are provided by Asp-71 and Glu-141. CTP-binding positions include 148 to 150 (DIE), 187 to 192 (KTKPLQ), and Lys-223. UTP-binding positions include 187–192 (KTKPLQ) and Lys-223. One can recognise a Glutamine amidotransferase type-1 domain in the interval 291 to 529 (KIALVGKYTK…FLNFLSVASA (239 aa)). An L-glutamine-binding site is contributed by Gly-354. The active-site Nucleophile; for glutamine hydrolysis is the Cys-381. Residues 382-385 (FGMQ), Glu-405, and Arg-462 contribute to the L-glutamine site. Catalysis depends on residues His-506 and Glu-508.

It belongs to the CTP synthase family. Homotetramer.

It carries out the reaction UTP + L-glutamine + ATP + H2O = CTP + L-glutamate + ADP + phosphate + 2 H(+). The catalysed reaction is L-glutamine + H2O = L-glutamate + NH4(+). The enzyme catalyses UTP + NH4(+) + ATP = CTP + ADP + phosphate + 2 H(+). It participates in pyrimidine metabolism; CTP biosynthesis via de novo pathway; CTP from UDP: step 2/2. Allosterically activated by GTP, when glutamine is the substrate; GTP has no effect on the reaction when ammonia is the substrate. The allosteric effector GTP functions by stabilizing the protein conformation that binds the tetrahedral intermediate(s) formed during glutamine hydrolysis. Inhibited by the product CTP, via allosteric rather than competitive inhibition. Catalyzes the ATP-dependent amination of UTP to CTP with either L-glutamine or ammonia as the source of nitrogen. Regulates intracellular CTP levels through interactions with the four ribonucleotide triphosphates. The chain is CTP synthase from Sulfolobus acidocaldarius (strain ATCC 33909 / DSM 639 / JCM 8929 / NBRC 15157 / NCIMB 11770).